Here is a 379-residue protein sequence, read N- to C-terminus: Inactive 2'-5'-oligoadenylate synthase 1B (379 aa).

Topologically, residues 1 to 355 (MEQELRSIPA…VPTEVDIPSQ (355 aa)) are cytoplasmic. A helical; Anchor for type IV membrane protein transmembrane segment spans residues 356–374 (NYFFHIICLIFWLLLRLIF). At 375–379 (GKHSV) the chain is on the extracellular side.

Belongs to the 2-5A synthase family. As to quaternary structure, interacts with OSBPL1A and ABCF3. Highly expressed in the brain, liver, spleen and heart.

It localises to the endoplasmic reticulum membrane. Functionally, does not have 2'-5'-OAS activity, but can bind double-stranded RNA. Displays antiviral activity against viruses via an alternative antiviral pathway independent of RNase L. This Rattus norvegicus (Rat) protein is Inactive 2'-5'-oligoadenylate synthase 1B (Oas1b).